The primary structure comprises 485 residues: MWYTSTRGMAPRVNFEGALFSGYAPDGGLYMPEELPRLDKETLRHWSTLSYRSLVKELCALFVGLELIPRHDLNGLIDQAFSRFRHRDVVHLCKLKNGLNILELWHGVTYAFKDLSLSCTAQFLQYFLEKKKKHVTIVVGTSGDTGSAAIESVQGSKNVDIIVLLPKGHCSKIQELQMTTVVKENVHVFGVEGNSDELDEPIKAVFADVAFVQRHNLMSLNSINWSRVLVQMAHHFFAYFQCTPSLDMHLLPTVEVVVPTGAGGNLAAGCIAQKMGLPISLVVAVNRNDIIHRTVQKGDFSLCEVVRKTLASAMDIQVPYNMERIFWLLAGSDSQTTRALMEQFERTQSLHLPKDLHSKLSEAVTSESVSDEAITQTMGRCWEENQYLLCPHSATAVSYHYQQTDSGQPSSIPRCCLAPASAVKFPEAVQAAGLTPETPAEILALEHKETRCTPMRRGDDWTQMLRDTIEALSLRWKGCVENTAE.

Lysine 113 is modified (N6-(pyridoxal phosphate)lysine).

Belongs to the threonine synthase family. Pyridoxal 5'-phosphate is required as a cofactor.

Acts as a catabolic phospho-lyase on both gamma- and beta-phosphorylated substrates. Degrades O-phospho-threonine (PThr) to alpha-ketobutyrate, ammonia and phosphate. The protein is Threonine synthase-like 2 (Thnsl2) of Rattus norvegicus (Rat).